A 169-amino-acid chain; its full sequence is uncharacterized protein (169 aa).

The protein resides in the mitochondrion. This is an uncharacterized protein from Paramecium tetraurelia.